Reading from the N-terminus, the 196-residue chain is Large ribosomal subunit protein eL15 (196 aa).

A disordered region spans residues 156–196 (HRGRAERGKTSAGRKGRGMRTRGRGTEKTRPSIRSHANQGK). The span at 167 to 178 (AGRKGRGMRTRG) shows a compositional bias: basic residues.

It belongs to the eukaryotic ribosomal protein eL15 family.

The protein is Large ribosomal subunit protein eL15 of Methanoregula boonei (strain DSM 21154 / JCM 14090 / 6A8).